Consider the following 379-residue polypeptide: Cytochrome b (379 aa).

A run of 4 helical transmembrane segments spans residues 34–54 (YGSL…MLAM), 78–100 (WMIR…VHIG), 113–133 (TWNI…LGYV), and 179–199 (FFSL…IHLL). Residues His-84 and His-98 each contribute to the heme b site. His-183 and His-197 together coordinate heme b. His-202 serves as a coordination point for a ubiquinone. A run of 4 helical transmembrane segments spans residues 225-245 (FSIK…FLVL), 289-309 (LGGV…PIFS), 320-340 (WSGM…WIGA), and 345-365 (APYI…FFWM).

The protein belongs to the cytochrome b family. In terms of assembly, the main subunits of complex b-c1 are: cytochrome b, cytochrome c1 and the Rieske protein. Heme b serves as cofactor.

The protein localises to the mitochondrion inner membrane. In terms of biological role, component of the ubiquinol-cytochrome c reductase complex (complex III or cytochrome b-c1 complex) that is part of the mitochondrial respiratory chain. The b-c1 complex mediates electron transfer from ubiquinol to cytochrome c. Contributes to the generation of a proton gradient across the mitochondrial membrane that is then used for ATP synthesis. The sequence is that of Cytochrome b (mt:Cyt-b) from Epiperipatus biolleyi (Velvet worm).